The sequence spans 479 residues: Cysteine--tRNA ligase (479 aa).

Residue Cys29 coordinates Zn(2+). The 'HIGH' region motif lies at 31–41 (ATVQGAPHIGH). The segment at 171-197 (QRVEDMQDAPDADPRGKRDPRDFALWK) is disordered. Positions 182 to 197 (ADPRGKRDPRDFALWK) are enriched in basic and acidic residues. 3 residues coordinate Zn(2+): Cys224, His249, and Glu253. Positions 280–284 (KMSKS) match the 'KMSKS' region motif. Lys283 contributes to the ATP binding site.

It belongs to the class-I aminoacyl-tRNA synthetase family. Monomer. Zn(2+) is required as a cofactor.

It localises to the cytoplasm. It catalyses the reaction tRNA(Cys) + L-cysteine + ATP = L-cysteinyl-tRNA(Cys) + AMP + diphosphate. The chain is Cysteine--tRNA ligase from Kocuria rhizophila (strain ATCC 9341 / DSM 348 / NBRC 103217 / DC2201).